The following is a 293-amino-acid chain: Ribonuclease Z (293 aa).

Histidine 60, histidine 62, aspartate 64, histidine 65, histidine 132, aspartate 200, and histidine 256 together coordinate Zn(2+). The active-site Proton acceptor is aspartate 64.

It belongs to the RNase Z family. As to quaternary structure, homodimer. The cofactor is Zn(2+).

The enzyme catalyses Endonucleolytic cleavage of RNA, removing extra 3' nucleotides from tRNA precursor, generating 3' termini of tRNAs. A 3'-hydroxy group is left at the tRNA terminus and a 5'-phosphoryl group is left at the trailer molecule.. Zinc phosphodiesterase, which displays some tRNA 3'-processing endonuclease activity. Probably involved in tRNA maturation, by removing a 3'-trailer from precursor tRNA. The protein is Ribonuclease Z of Sulfurisphaera tokodaii (strain DSM 16993 / JCM 10545 / NBRC 100140 / 7) (Sulfolobus tokodaii).